The following is a 346-amino-acid chain: tRNA N6-adenosine threonylcarbamoyltransferase (346 aa).

His117 and His121 together coordinate Fe cation. Substrate contacts are provided by residues 139 to 143, Asp172, Gly185, Asp189, and Asn278; that span reads QVSGG. Residue Asp308 participates in Fe cation binding.

It belongs to the KAE1 / TsaD family. Fe(2+) is required as a cofactor.

The protein localises to the cytoplasm. The catalysed reaction is L-threonylcarbamoyladenylate + adenosine(37) in tRNA = N(6)-L-threonylcarbamoyladenosine(37) in tRNA + AMP + H(+). Its function is as follows. Required for the formation of a threonylcarbamoyl group on adenosine at position 37 (t(6)A37) in tRNAs that read codons beginning with adenine. Is involved in the transfer of the threonylcarbamoyl moiety of threonylcarbamoyl-AMP (TC-AMP) to the N6 group of A37, together with TsaE and TsaB. TsaD likely plays a direct catalytic role in this reaction. The chain is tRNA N6-adenosine threonylcarbamoyltransferase from Lactobacillus delbrueckii subsp. bulgaricus (strain ATCC 11842 / DSM 20081 / BCRC 10696 / JCM 1002 / NBRC 13953 / NCIMB 11778 / NCTC 12712 / WDCM 00102 / Lb 14).